Reading from the N-terminus, the 260-residue chain is Indole-3-glycerol phosphate synthase (260 aa).

The protein belongs to the TrpC family.

The catalysed reaction is 1-(2-carboxyphenylamino)-1-deoxy-D-ribulose 5-phosphate + H(+) = (1S,2R)-1-C-(indol-3-yl)glycerol 3-phosphate + CO2 + H2O. It participates in amino-acid biosynthesis; L-tryptophan biosynthesis; L-tryptophan from chorismate: step 4/5. The sequence is that of Indole-3-glycerol phosphate synthase from Staphylococcus saprophyticus subsp. saprophyticus (strain ATCC 15305 / DSM 20229 / NCIMB 8711 / NCTC 7292 / S-41).